Consider the following 931-residue polypeptide: Kinesin heavy chain (931 aa).

The region spanning 6 to 329 (SIKVVARFRP…LRFGMRAKSI (324 aa)) is the Kinesin motor domain. ATP is bound by residues 87-94 (GQTGAGKS) and 237-244 (GSEKVGKT). A coiled-coil region spans residues 342 to 864 (AELKSLLKKA…VKERLELAKA (523 aa)). 2 disordered regions span residues 388–465 (TTDA…EKQL) and 886–931 (AKPL…FTKS). The segment covering 402-419 (STRPSTPSLISDSRSETP) has biased composition (polar residues). Over residues 432-456 (LDKDEREEFLRRENELQDQISEKES) the composition is skewed to basic and acidic residues. Residues 902-931 (PTIQNLQGQNEGNTSSGSSSKRASWFFTKS) show a composition bias toward polar residues.

The protein belongs to the TRAFAC class myosin-kinesin ATPase superfamily. Kinesin family. Kinesin subfamily.

The protein localises to the cytoplasm. It is found in the cytoskeleton. Its function is as follows. Kinesin is a microtubule-associated force-producing protein that may play a role in organelle transport. Its motor activity is directed toward the microtubule's plus end. The sequence is that of Kinesin heavy chain (KLP1) from Gibberella moniliformis (Maize ear and stalk rot fungus).